Consider the following 745-residue polypeptide: Translation initiation factor IF-2 (745 aa).

The tract at residues 1-154 is disordered; the sequence is MSDKPRRDTG…PAARPVVRPR (154 aa). Over residues 36 to 56 the composition is skewed to polar residues; sequence TGRSPNASTGGNRSAGNQAGN. A compositionally biased stretch (low complexity) spans 68–98; sequence ATTPAPNRNTPPAGARQGGAANARTGTPPVA. Residues 99–113 show a composition bias toward gly residues; sequence RGGGGGVTPPTGRGG. Residues 114 to 126 are compositionally biased toward low complexity; that stretch reads NNPRAARNQPRSR. A compositionally biased stretch (basic and acidic residues) spans 127-138; sequence QQPEEREREHVL. The tr-type G domain maps to 241–410; sequence PRPPVVTIMG…LLVADLEDLR (170 aa). The interval 250–257 is G1; that stretch reads GHVDHGKT. Residue 250-257 participates in GTP binding; it reads GHVDHGKT. The G2 stretch occupies residues 275–279; sequence GITQH. Positions 296–299 are G3; the sequence is DTPG. GTP-binding positions include 296 to 300 and 350 to 353; these read DTPGH and NKID. A G4 region spans residues 350–353; the sequence is NKID. Residues 386–388 form a G5 region; sequence SAR.

This sequence belongs to the TRAFAC class translation factor GTPase superfamily. Classic translation factor GTPase family. IF-2 subfamily.

Its subcellular location is the cytoplasm. Its function is as follows. One of the essential components for the initiation of protein synthesis. Protects formylmethionyl-tRNA from spontaneous hydrolysis and promotes its binding to the 30S ribosomal subunits. Also involved in the hydrolysis of GTP during the formation of the 70S ribosomal complex. This Chloroflexus aurantiacus (strain ATCC 29366 / DSM 635 / J-10-fl) protein is Translation initiation factor IF-2.